A 422-amino-acid chain; its full sequence is Mannose-1-phosphate guanylyltransferase regulatory subunit alpha-A (422 aa).

The substrate-binding domain stretch occupies residues 2–253; the sequence is LKAVILIGGP…DRFWSQIKSA (252 aa). The GDP-alpha-D-mannose site is built by glutamate 85 and glutamine 249. The tract at residues 275–422 is hexapeptide repeat domain; sequence LATNTEGGAK…NRSFKNQIIL (148 aa). The interval 358-386 is C-loop; that stretch reads TPSDPNPNDPYAKIDSETLFRDGKLTPSI.

It belongs to the transferase hexapeptide repeat family. Component of the GMPPA-GMPPB mannose-1-phosphate guanylyltransferase complex composed of 4 gmppa subunits and 8 gmppb subunits; the complex is organized into three layers, a central layer made up of 2 gmppa dimers sandwiched between two layers each made up of 2 gmppb dimers.

It functions in the pathway nucleotide-sugar biosynthesis; GDP-alpha-D-mannose biosynthesis; GDP-alpha-D-mannose from alpha-D-mannose 1-phosphate (GTP route): step 1/1. In terms of biological role, regulatory subunit of the GMPPA-GMPPB mannose-1-phosphate guanylyltransferase complex; reduces the catalytic activity of GMPPB when part of the complex. Mediates allosteric feedback inhibition of GMPPB catalytic activity upon binding GDP-alpha-D-mannose. Together with GMPPB regulates GDP-alpha-D-mannose levels. One of two paralogs (gmppaa and gmppab) that may have redundant functions. The polypeptide is Mannose-1-phosphate guanylyltransferase regulatory subunit alpha-A (gmppaa) (Danio rerio (Zebrafish)).